The chain runs to 79 residues: MFVKTGDKVKVIAGKDKGKEGTVLSVNAKTNRIVVKGVNKIKKHEKPSQTNANGGVVEKEGSIHASNVKVIAKKEDNNK.

Belongs to the universal ribosomal protein uL24 family. Part of the 50S ribosomal subunit.

In terms of biological role, one of two assembly initiator proteins, it binds directly to the 5'-end of the 23S rRNA, where it nucleates assembly of the 50S subunit. One of the proteins that surrounds the polypeptide exit tunnel on the outside of the subunit. In Lactobacillus johnsonii (strain CNCM I-12250 / La1 / NCC 533), this protein is Large ribosomal subunit protein uL24.